A 2641-amino-acid polypeptide reads, in one-letter code: MHSTSGLAPVFRVEENHMIRNRENLERPISKKGTITLLSKMPMGFVLNSCSCAYIDNLLAHSSIHRVKPHSFMIQRLVVICGRSSPSLPNHAANIILSAFNFCQIEAPAKKFLEEDAALSLFHTILSYSTVTQINRSGIEILGAQRLTSALCDLIYAYTKTMDDMVASKTLTHLCKKLAGLFDPLVVLPFISKLAKSRRLRHYLQPLFLGHCEYTSDTWGVSPEGAEIYNQIARGNFTTQTLIEIVQTFLEKEVKEVIISSTTDPIKLVQYLISCSNPDNTEIVQALAFLLYSNTKLLPAGSGGTIDMDVQAADTITTARLGDTKFTQPVKDALLDSGREALLRRMEIYGVSLLSSVENFVTELKQAPIQKKMVTNNSVANAILYMLQYNFDMSRDIENGRQDNSPFWGGSNFVIGITRFVEEQQAAVRDMEGFSDWYPDINWVEVIKEFDSEEFAICRQTIIMFADIFPIMFQPQNFPVSFFLTPWRYYDHQLRLFEFMIEYADVWNISQYPHTKVLTPDLNLKTIPDDSTSVVQLWNCQEFSNCLLTIANSQPSLYNAIKQFYNVGSMQAGDVSMLALILSPTQWTTGRQDLIRHFLPSFILKSPNVTPVLNLVWNDTSLSKHMRQHVIYCLTSMHAADSSQLAKILDVAHDIKPTGLSELLNQAPKHLAFMVDLACLASKRDYLNLEKWIEDKEKAHGEAMTVAVLQFIQKKYQHAQLVAAIAPKTQATTPGAPSEPLQVLIPFVSKRARKPLRQQFPLVFQVMKENSGRSSSVSSGGHVQQSSGSQPQQQQFGGGSGLPPSGVVPVQQQPQQPPSLQQQHSQQSLPTPPTTSQQQIHVQQSVPGPIQRPAQFAPQPMFPPQAQAQHQHQHMMGQPPPSSQNAQPGMNLLMNMSPFASGNNRDLLKVVQPAPPPPSSMSPSTQMMRSLIPPLTQRQNSNSGWHAAPAPQRPSGPPTPQQQMDFRGQIQEFAPQGPHQLQRSGSVTGRSMGIVGQKTSSNFSVGAPIPGSAAATAAAAANVQQPMNEDFQSMTFAEDIQEEANSYFEKIYSVNNAMSVENLIDLLKRFRVSNDRRERLVLACVVKNLFEEYRFFHEYPERELRTTAAVYGGIIREDIISNVQFATAVRKVIESLSADPNTMLWTFGIVALQHCRSKLCAYPKVCQMIVSSENFARFPQLLKDYVIAGVKGELPPEGGRHTPVGSAQAGSASSTPTPAAAPTNWGAVARAASVDPKNSLPANRTGNVLSYTNVDTLVMATNKDGAEIAQPAEAIVDKISFLFNNLSQSNLIQKKDEVVEMISDHGDAFTLWLAQYIVMKRVSIEQNFQPLYNQFVNAIENPYLDQCIKRETFRNIRILLRTDKRTTVASNYSDRQLLKNLGSWLGAITIARNKPILLNDLDLKSLLLEAYYKGQAELLYVVPFISKILTACSKTSLFTPTCAWIRSILKVLAELHNEPDLKINLKFEIEVLCKELNVDLNQLQMDGILKDTEKLVRVPQQLCDVKLLTRPEAASPVQSKIHMSGSAEQLSGMSPAIPDQVKPATPQPTEAELQSGTGGGGSQGAEAQVVPNVTHFAYHDINVLTYDGLIPHVKIVSHLPLFQLHPHAKHLVRPAMIHAIKELIGPVTERALKIAMTVTESLVRKDFALDPEEQNLRAASFHMMRAMTAGMAMITCRDPLASSMHSNLANAFSSSLRSTAANPEMKQMIEDAAATITQDNVELSTNFIVKTACEKATQDIEKRLEADYQKRIAAKAEMSFYRDEIAAAIHAQLPKAIATVPGPTDKALMGIYDQFSSRICGFKANSGEDPVSAEPGSGAITPVQTQSKEMELVCQQLQVIIKEVDQTTQAQPHLSNSAFQTVCLMRELMQNVISTKDANHLMILVTRSTEHLLHAYRLEGTPPKNLLDVEWARRLRDLFIGLMRLLQNYFPLVELSRRITTAIMQIRSDYKWNMEGIEILFKQNLLQSVLWDQHLAGSMDNGGNMEAVLFAQKFVRSIGGGDMSRIQFLKERFPLTCEQLTKLHQLQSATRTEGMNNAMNNGAGNAAHHHAGLQQQPPVALPMEAAPMPQASADAMAQRGYDDQEMTAKVEIIMREWIGLCYSPTGQRSPQESLAQMIQLMHEHGVLATDDKITQFFRLCVENCVDISVRVMKSEQLANGLPTTLIRHRCYYTLDAFVKLMALMIRHSDNGQSQNKINLLKKLLNIIVGVLHMDHEVRKQDFNAMPYHRILISLFNEITGPDPLKLLEPIAWSILEAFGQTFFALQPRRMPGFAFAWLDIVGHRNVIGRLLANTGIAETVDAVKTAATYTQLIISHLKFLAPFLRNIQLPKSIAILYKGTLRVLLVILHDFPELLCEFHYVICDTIPPNCVQLRNLILSAYPRQMRLPDPFALNFKQVDTIPEMAVEPKSNLNMATIIPDNIRIPLDEYLANRISVDFLPNLPTLLQTQNQAGTKYNTTVMNALVLYVGIRAIEHLHLRRQRISTLNIAHTSYMDIFQNLAIQLDTEGRYLLFNGIANQLRYPNAHTHYFSCVFLYLFKNSTNDTIQEQITRILFERLVALRPHPWGLLITFIELIKNPTYNFWRYEFTSCAPEIQRLFQNVANTCVPAQGSQPQAQPDGAPGPLGNNTGAANQQQNPNTN.

An LXXLL motif is present at residues 660 to 664 (LSELL). 5 disordered regions span residues 771-887 (SGRS…QNAQ), 936-963 (TQRQ…PQQQ), 1197-1221 (EGGR…PAAA), 1518-1565 (QSKI…SQGA), and 2034-2054 (GMNN…AGLQ). 3 stretches are compositionally biased toward low complexity: residues 774-795 (SSSV…QQQQ), 802-839 (LPPS…SQQQ), and 853-877 (PAQF…HMMG). Over residues 951–960 (PQRPSGPPTP) the composition is skewed to pro residues. Low complexity predominate over residues 1205-1221 (GSAQAGSASSTPTPAAA). Residues 2034 to 2046 (GMNNAMNNGAGNA) are compositionally biased toward low complexity. The short motif at 2341–2345 (LRVLL) is the LXXLL element. A disordered region spans residues 2609 to 2641 (AQGSQPQAQPDGAPGPLGNNTGAANQQQNPNTN).

The protein belongs to the CNOT1 family. As to quaternary structure, component of the CCR4-NOT complex at least composed of ccf-1, ccr-4 and let-711, which is required for germ cell development in hermaphrodites. Within the complex interacts with ccf-1 and ccr-4; the interactions are direct. In terms of tissue distribution, highly expressed in the germline of hermaphrodites.

The protein resides in the nucleus. Scaffolding component of the CCR4-NOT complex which is one of the major cellular mRNA deadenylases and is linked to various cellular processes including bulk mRNA degradation, miRNA-mediated repression, translational repression during translational initiation and general transcription regulation. Positively regulates the accumulation of the CCR4-NOT complex component ccr-1. Within the complex promotes germ cell development and fertility in hermaphrodites. Additional complex functions may be a consequence of its influence on mRNA expression. Its scaffolding function implies its interaction with the catalytic complex module and diverse RNA-binding proteins mediating the complex recruitment to selected mRNA 3'UTRs. Mediates the recruitment of the CCR4-NOT complex to miRNA targets and to the RISC complex. Acts as a transcriptional repressor. Represses the ligand-dependent transcriptional activation by nuclear receptors. In embryos, plays a role in female pronucleus and mitotic spindle positioning during the first cleavage divisions after fertilization. This may partly be through negatively regulating the accumulation of zyg-9 at the centrosome. Negatively regulates the formation of long astral microtubules in developing embryos. Required for the stabilization and degradation of maternal mRNAs such as nos-2 in somatic blastomeres. This Caenorhabditis elegans protein is CCR4-NOT transcription complex subunit let-711.